The sequence spans 200 residues: Alpha/beta-tubulin-N-acetyltransferase 9 (200 aa).

The 148-residue stretch at glutamate 34 to threonine 181 folds into the N-acetyltransferase domain.

This sequence belongs to the acetyltransferase family. GNAT subfamily. In terms of assembly, interacts with microtubules as well as alpha/beta-tubulin heterodimers.

The protein localises to the nucleus. It is found in the cytoplasm. It localises to the cytoskeleton. The protein resides in the spindle. Its subcellular location is the spindle pole. It carries out the reaction N-terminal L-methionyl-[tubulin] + acetyl-CoA = N-terminal N(alpha)-acetyl-L-methionyl-[tubulin] + CoA + H(+). In terms of biological role, N-acetyltransferase that mediates the acetylation of the N-terminal residues of alpha- and beta-tubulin. Required for microtubule stability and inhibition of JNK signaling to promote cell survival during development, possibly acting independently of its N-acetyltransferase activity. Necessary for the stabilization of spindle microtubules and for mitosis progression. Regulates microtubule stability by inhibiting Spastin-mediated depolymerization and promoting Eb1-mediated polymerization. This chain is Alpha/beta-tubulin-N-acetyltransferase 9, found in Drosophila melanogaster (Fruit fly).